A 334-amino-acid chain; its full sequence is D-fructose 1,6-bisphosphatase class 2/sedoheptulose 1,7-bisphosphatase (334 aa).

Mn(2+) is bound by residues D33, E57, D85, and E88. Substrate is bound by residues E88–T90, Y119, R164–R166, and D186–D188. E213 lines the Mn(2+) pocket.

The protein belongs to the FBPase class 2 family. Homotetramer. It depends on Mn(2+) as a cofactor.

It carries out the reaction beta-D-fructose 1,6-bisphosphate + H2O = beta-D-fructose 6-phosphate + phosphate. The enzyme catalyses D-sedoheptulose 1,7-bisphosphate + H2O = D-sedoheptulose 7-phosphate + phosphate. It participates in carbohydrate biosynthesis; Calvin cycle. Catalyzes the hydrolysis of fructose 1,6-bisphosphate (Fru 1,6-P2) and sedoheptulose 1,7-bisphosphate (Sed 1,7-P2) to fructose 6-phosphate and sedoheptulose 7-phosphate, respectively. This is D-fructose 1,6-bisphosphatase class 2/sedoheptulose 1,7-bisphosphatase from Synechococcus sp. (strain RCC307).